A 327-amino-acid chain; its full sequence is Poly(ribitol-phosphate) beta-N-acetylglucosaminyltransferase TarP (327 aa).

UDP-N-acetyl-alpha-D-glucosamine is bound by residues proline 9, aspartate 41, asparagine 68, arginine 76, and 92 to 94 (DSD). Aspartate 94 serves as a coordination point for Mn(2+). The active-site Proton acceptor is the aspartate 181.

The protein belongs to the glycosyltransferase 2 family. Homotrimer. Mn(2+) is required as a cofactor.

It catalyses the reaction 4-O-[(D-ribitylphospho)(n)-di{(2R)-glycerylphospho}]-N-acetyl-beta-D-mannosaminyl-(1-&gt;4)-N-acetyl-alpha-D-glucosaminyl di-trans,octa-cis-undecaprenyl diphosphate + n UDP-N-acetyl-alpha-D-glucosamine = 4-O-([3-N-acetyl-beta-D-glucosaminyl-1-D-ribitylphospho](n)-di{[2R]-1-glycerylphospho})-N-acetyl-beta-D-mannosaminyl-(1-&gt;4)-N-acetyl-alpha-D-glucosaminyl di-trans,octa-cis-undecaprenyl diphosphate + n UDP + n H(+). It participates in cell wall biogenesis; poly(ribitol phosphate) teichoic acid biosynthesis. Attaches beta-O-GlcNAc (beta-O-N-acetyl-D-glucosamine) residues to the C3 position of poly(RboP)-wall teichoic acids (WTAs). Attenuates immunogenicity of WTA and protects S.aureus against adaptative host defenses by allowing bacteria to evade recognition by preexisting anti-S.aureus antibodies. Also protects the cell from podophage infection. The polypeptide is Poly(ribitol-phosphate) beta-N-acetylglucosaminyltransferase TarP (Staphylococcus aureus (strain N315)).